The chain runs to 130 residues: Small ribosomal subunit protein uS9 (130 aa).

Belongs to the universal ribosomal protein uS9 family.

In Teredinibacter turnerae (strain ATCC 39867 / T7901), this protein is Small ribosomal subunit protein uS9.